The following is a 525-amino-acid chain: Tigger transposable element-derived protein 2 (525 aa).

The 52-residue stretch at 1-52 (MLGKRKRVVLTIKDKLDIIKKLEEGISFKKLSVVYGIGESTVRDIKKNKERI) folds into the HTH psq-type domain. 2 consecutive DNA-binding regions (H-T-H motif) follow at residues 28-48 (FKKLSVVYGIGESTVRDIKKN) and 100-132 (TICAKQAKFFFDALGMEGDFNASSGWLTRFKQR). Positions 67–139 (KRKSMKSSTY…KQRHGIPKAA (73 aa)) constitute an HTH CENPB-type domain. Residues 168–385 (LQPEQIYGAD…VKSSTITKAW (218 aa)) enclose the DDE-1 domain. The disordered stretch occupies residues 442–474 (QVLTDSESAEDQTKAAEQKPSSKSRKTELNPEK).

The protein belongs to the tigger transposable element derived protein family.

The protein localises to the nucleus. The protein is Tigger transposable element-derived protein 2 (TIGD2) of Homo sapiens (Human).